Here is a 221-residue protein sequence, read N- to C-terminus: uncharacterized protein (221 aa).

The protein to E.coli YheO.

This is an uncharacterized protein from Haemophilus influenzae (strain ATCC 51907 / DSM 11121 / KW20 / Rd).